The following is a 567-amino-acid chain: NADH-ubiquinone oxidoreductase chain 2 (567 aa).

14 helical membrane passes run 2–22 (LILSLFILIIYSSIINNIDTI), 43–63 (IGIIIILYSLYIFKDISLSYI), 85–105 (NIFNIYIIFLLLIVIISLLSI), 133–153 (LNIYYISIIIFNIIGLILLLT), 158–178 (ISIFISIELQSYSLYILTGII), 189–209 (LFYYLIGGIGSIIILYGISLL), 236–256 (ILIGWLFIIIGLLIKIGAAPM), 274–294 (YISLIPKISILSYILLIILNL), 312–332 (LIYILSIIIILSLIIGSIGGL), 340–360 (ILAYSGLLNIGYFLLIILSLI), 372–392 (IIYITQYCFNHISIFILLIIA), 423–443 (LIFCLIIIIGSFIGIPPLFGF), 459–479 (LFLSLLLIISSIISSIYYLYF), and 530–550 (VGNYITYILSSYILIILFNFI).

Belongs to the complex I subunit 2 family.

The protein resides in the mitochondrion inner membrane. The catalysed reaction is a ubiquinone + NADH + 5 H(+)(in) = a ubiquinol + NAD(+) + 4 H(+)(out). Core subunit of the mitochondrial membrane respiratory chain NADH dehydrogenase (Complex I) that is believed to belong to the minimal assembly required for catalysis. Complex I functions in the transfer of electrons from NADH to the respiratory chain. The immediate electron acceptor for the enzyme is believed to be ubiquinone. The protein is NADH-ubiquinone oxidoreductase chain 2 (ND2) of Wickerhamomyces canadensis (Yeast).